The primary structure comprises 233 residues: Nickel import system ATP-binding protein NikE (233 aa).

One can recognise an ABC transporter domain in the interval 2-228; sequence IELKHVTFGY…DRHSYTKELV (227 aa). Position 35–42 (35–42) interacts with ATP; that stretch reads GESGCGKS.

The protein belongs to the ABC transporter superfamily. As to quaternary structure, the complex is composed of two ATP-binding proteins (NikD and NikE), two transmembrane proteins (NikB and NikC) and a solute-binding protein (NikA).

Its subcellular location is the cell membrane. It catalyses the reaction Ni(2+)(out) + ATP + H2O = Ni(2+)(in) + ADP + phosphate + H(+). Part of the ABC transporter complex NikABCDE (Opp2) involved in nickel import. Probably responsible for energy coupling to the transport system. The sequence is that of Nickel import system ATP-binding protein NikE from Staphylococcus aureus (strain bovine RF122 / ET3-1).